Reading from the N-terminus, the 377-residue chain is Ribosomal RNA large subunit methyltransferase G (377 aa).

This sequence belongs to the methyltransferase superfamily. RlmG family.

The protein localises to the cytoplasm. The enzyme catalyses guanosine(1835) in 23S rRNA + S-adenosyl-L-methionine = N(2)-methylguanosine(1835) in 23S rRNA + S-adenosyl-L-homocysteine + H(+). Functionally, specifically methylates the guanine in position 1835 (m2G1835) of 23S rRNA. The sequence is that of Ribosomal RNA large subunit methyltransferase G from Shewanella oneidensis (strain ATCC 700550 / JCM 31522 / CIP 106686 / LMG 19005 / NCIMB 14063 / MR-1).